We begin with the raw amino-acid sequence, 295 residues long: Protease HtpX (295 aa).

Transmembrane regions (helical) follow at residues Ile4 to Leu24 and Gln42 to Ser62. His147 provides a ligand contact to Zn(2+). Glu148 is an active-site residue. His151 is a Zn(2+) binding site. 2 consecutive transmembrane segments (helical) span residues Val158–Ile178 and Ile199–Phe219. Glu224 serves as a coordination point for Zn(2+).

This sequence belongs to the peptidase M48B family. Zn(2+) serves as cofactor.

It is found in the cell inner membrane. The protein is Protease HtpX of Pseudomonas syringae pv. syringae (strain B728a).